The sequence spans 156 residues: Small ribosomal subunit protein uS7 (156 aa).

The protein belongs to the universal ribosomal protein uS7 family. Part of the 30S ribosomal subunit. Contacts proteins S9 and S11.

In terms of biological role, one of the primary rRNA binding proteins, it binds directly to 16S rRNA where it nucleates assembly of the head domain of the 30S subunit. Is located at the subunit interface close to the decoding center, probably blocks exit of the E-site tRNA. This is Small ribosomal subunit protein uS7 from Histophilus somni (strain 129Pt) (Haemophilus somnus).